Here is a 454-residue protein sequence, read N- to C-terminus: Alkaline extracellular protease (454 aa).

The signal sequence occupies residues 1–15; the sequence is MKLATAFTILTAVLA. A propeptide spanning residues 16-157 is cleaved from the precursor; it reads APLAAPAPAP…EIPASSNAKR (142 aa). Residues 68 to 146 form the Inhibitor I9 domain; it reads FIVVFDSSAT…TVEPDTIVSL (79 aa). N123 is a glycosylation site (N-linked (GlcNAc...) asparagine). The Peptidase S8 domain maps to 166-454; it reads QWGLSRISHK…NAVAYNGVGI (289 aa). Catalysis depends on charge relay system residues D200, H231, and S397.

The protein belongs to the peptidase S8 family. The pro-region is removed through cleavage by XPR6 after Lys156-Arg157, which yields mature active XPR2. In terms of processing, the 10 consecutive -X-Ala- or -X-Pro- dipeptides located over 100 amino acids upstream of the N-terminal of mature XPR2 are subject to dipeptidyl aminopeptidase (DPAPase)-processing. DPAPase activity is not necessary for XPR6 cleavage and for secretion of mature active XPR2. Post-translationally, N-glycosylated. Glycosylation within the pro-region has no effect on secretion and maturation at 18 degrees Celsius, but is required for secretion at 28 degrees Celsius.

Its subcellular location is the secreted. It catalyses the reaction Hydrolysis of proteins with broad specificity for peptide bonds, and a preference for a large uncharged residue in P1. Hydrolyzes peptide amides.. Its activity is regulated as follows. The protease activity is completely inhibited by the serine inhibitor PMSF but is not affected by thiol group inhibitors and in the presence of dithiothreitol. In the presence of high concentrations of o-phenanthroline the protease activity is only partially inhibited. The pro-region plays an inhibitory role and may provide a mechanism for preventing premature activation in the secretory pathway. Its function is as follows. Major secreted protein that belongs to the subtilisin family serine proteases. This Yarrowia lipolytica (strain CLIB 122 / E 150) (Yeast) protein is Alkaline extracellular protease.